Reading from the N-terminus, the 353-residue chain is Lipase chaperone (353 aa).

Residues Ile-12–Val-32 traverse the membrane as a helical segment.

Belongs to the lipase chaperone family.

The protein localises to the cell inner membrane. May be involved in the folding of the extracellular lipase during its passage through the periplasm. The sequence is that of Lipase chaperone from Xylella fastidiosa (strain M23).